The chain runs to 67 residues: Medusin-S1 (67 aa).

The first 22 residues, 1-22 (MSFLKKSLFLVLFLGFVSLSIC), serve as a signal peptide directing secretion. Positions 23–48 (EEEKRETEEKENEQEDDREERSEEKR) are excised as a propeptide. Residues 26 to 47 (KRETEEKENEQEDDREERSEEK) form a disordered region. The span at 31–40 (EKENEQEDDR) shows a compositional bias: acidic residues. The residue at position 66 (leucine 66) is a Leucine amide.

It belongs to the frog skin active peptide (FSAP) family. Medusin subfamily. In terms of tissue distribution, expressed by the skin glands.

The protein localises to the secreted. Its subcellular location is the target cell membrane. Its function is as follows. Antibacterial peptide with moderate activity against the Gram-positive bacteria (S.aureus ATCC 25923, MIC=25 uM), but not against all other bacteria (both Gram-positive and Gram-negative) tested. Does not show activity against fungi, and against Leishmania species. It adopts an alpha-helical structure with very low amphipathicity in membrane environments. The polypeptide is Medusin-S1 (Phyllomedusa sauvagei (Sauvage's leaf frog)).